The primary structure comprises 131 residues: MSNGTDSKTASAPPARSGGGFGGGGSRGGDRGDRGDRGGDRGDRGGGLGGDDDKRGGGRGFGRKKVCRFCAEKNASVDFKDQATLKYFVTERGKIIPRRISGNCAKHQREVAVAIKRARGIALLPYNAVVG.

Positions Met1–Ala10 are enriched in polar residues. The interval Met1 to Gly60 is disordered. Over residues Ser17–Arg27 the composition is skewed to gly residues. Positions Gly28–Arg44 are enriched in basic and acidic residues.

This sequence belongs to the bacterial ribosomal protein bS18 family. As to quaternary structure, part of the 30S ribosomal subunit. Forms a tight heterodimer with protein bS6.

In terms of biological role, binds as a heterodimer with protein bS6 to the central domain of the 16S rRNA, where it helps stabilize the platform of the 30S subunit. The polypeptide is Small ribosomal subunit protein bS18 (Myxococcus xanthus (strain DK1622)).